Reading from the N-terminus, the 319-residue chain is Cobalamin biosynthesis protein CbiB (319 aa).

Helical transmembrane passes span 56 to 76 (VMWVVVVGATWGVAWGVLALA), 82 to 102 (WFGWSVEVWMIFTTLAGRSLA), 153 to 173 (VDGIIAPLFFLFLGGAPLAMA), 204 to 224 (VANYLPARLSWLLLGIAAGLC), and 296 to 316 (LMWVASTLALALFIAARCGLS).

The protein belongs to the CobD/CbiB family.

Its subcellular location is the cell membrane. It functions in the pathway cofactor biosynthesis; adenosylcobalamin biosynthesis. Functionally, converts cobyric acid to cobinamide by the addition of aminopropanol on the F carboxylic group. However, the true cosubstrate could be (R)-1-amino-2-propanol O-2-phosphate, leading to cobinamide phosphate. This is Cobalamin biosynthesis protein CbiB from Salmonella choleraesuis (strain SC-B67).